Here is a 431-residue protein sequence, read N- to C-terminus: Histidinol dehydrogenase (431 aa).

NAD(+) is bound by residues Tyr-124, Gln-187, and Asn-210. Residues Ser-236, Gln-258, and His-261 each coordinate substrate. The Zn(2+) site is built by Gln-258 and His-261. Active-site proton acceptor residues include Glu-325 and His-326. Substrate-binding residues include His-326, Asp-359, Glu-413, and His-418. Residue Asp-359 participates in Zn(2+) binding. His-418 is a Zn(2+) binding site.

The protein belongs to the histidinol dehydrogenase family. Zn(2+) serves as cofactor.

The enzyme catalyses L-histidinol + 2 NAD(+) + H2O = L-histidine + 2 NADH + 3 H(+). It functions in the pathway amino-acid biosynthesis; L-histidine biosynthesis; L-histidine from 5-phospho-alpha-D-ribose 1-diphosphate: step 9/9. Functionally, catalyzes the sequential NAD-dependent oxidations of L-histidinol to L-histidinaldehyde and then to L-histidine. This Legionella pneumophila subsp. pneumophila (strain Philadelphia 1 / ATCC 33152 / DSM 7513) protein is Histidinol dehydrogenase.